Reading from the N-terminus, the 559-residue chain is (R)-mandelonitrile lyase 1 (559 aa).

An N-terminal signal peptide occupies residues 1–27 (MEKSTMSVILFVLHLLVLHLQYSEVHS). Residues asparagine 30 and asparagine 44 are each glycosylated (N-linked (GlcNAc...) asparagine). FAD-binding positions include 63–64 (TS), 82–83 (ER), threonine 133, and 137–140 (NAGV). Residues asparagine 145, asparagine 162, asparagine 178, and asparagine 218 are each glycosylated (N-linked (GlcNAc...) asparagine). Valine 244 contacts FAD. Asparagine 252, asparagine 255, asparagine 309, asparagine 380, asparagine 402, asparagine 420, and asparagine 467 each carry an N-linked (GlcNAc...) asparagine glycan. Cysteine 427 and cysteine 478 form a disulfide bridge. Tyrosine 485 provides a ligand contact to substrate. Residue 486–487 (WH) participates in FAD binding. Catalysis depends on histidine 487, which acts as the Proton donor. The active-site Proton acceptor is the histidine 525. 526-527 (PQ) contributes to the FAD binding site.

The protein belongs to the GMC oxidoreductase family. As to quaternary structure, monomer. Requires FAD as cofactor.

The enzyme catalyses (R)-mandelonitrile = benzaldehyde + hydrogen cyanide. Its function is as follows. Involved in cyanogenesis, the release of HCN from injured tissues. Catalyzes the stereospecific addition of HCN to a variety of aldehydes in vitro. It is a major seed constituent, and could have the additional role of a storage form for reduced nitrogen. In Prunus dulcis (Almond), this protein is (R)-mandelonitrile lyase 1 (MDL1).